The chain runs to 151 residues: Lectin-like protein BA14k (151 aa).

An N-terminal signal peptide occupies residues 1 to 26; sequence MNIFKQTCVGAFAVIFGATSIAPTMA. The chain crosses the membrane as a helical span at residues 83 to 103; that stretch reads GWWYPLAAFGAGAIIGGAVSQ.

The protein belongs to the BA14k family.

The protein localises to the cell membrane. In terms of biological role, has immunoglobulin-binding and hemagglutination properties, and can bind to mannose. Essential for virulence. May be involved in LPS biosynthesis or polysaccharide transport. The protein is Lectin-like protein BA14k of Brucella anthropi (strain ATCC 49188 / DSM 6882 / CCUG 24695 / JCM 21032 / LMG 3331 / NBRC 15819 / NCTC 12168 / Alc 37) (Ochrobactrum anthropi).